Consider the following 196-residue polypeptide: C-type lectin domain family 3 member A (196 aa).

A signal peptide spans methionine 1–glycine 22. 3 cysteine pairs are disulfide-bonded: cysteine 68-cysteine 78, cysteine 95-cysteine 191, and cysteine 167-cysteine 183. The 119-residue stretch at valine 74 to glutamate 192 folds into the C-type lectin domain.

The protein localises to the secreted. In terms of biological role, promotes cell adhesion to laminin and fibronectin. The protein is C-type lectin domain family 3 member A (Clec3a) of Mus musculus (Mouse).